Consider the following 252-residue polypeptide: Two-component response regulator ORR2 (252 aa).

The region spanning 7–157 (RVLVVDDSPV…DVQRLRKCSG (151 aa)) is the Response regulatory domain. At aspartate 90 the chain carries 4-aspartylphosphate.

This sequence belongs to the ARR family. Type-A subfamily. Two-component system major event consists of a His-to-Asp phosphorelay between a sensor histidine kinase (HK) and a response regulator (RR). In plants, the His-to-Asp phosphorelay involves an additional intermediate named Histidine-containing phosphotransfer protein (HPt). This multistep phosphorelay consists of a His-Asp-His-Asp sequential transfer of a phosphate group between first a His and an Asp of the HK protein, followed by the transfer to a conserved His of the HPt protein and finally the transfer to an Asp in the receiver domain of the RR protein. Expressed in mature leaves and flowers, and at low levels in roots and shoots.

In terms of biological role, functions as a response regulator involved in His-to-Asp phosphorelay signal transduction system. Phosphorylation of the Asp residue in the receiver domain activates the ability of the protein to promote the transcription of target genes. Type-A response regulators seem to act as negative regulators of the cytokinin signaling. This is Two-component response regulator ORR2 from Oryza sativa subsp. indica (Rice).